The following is a 183-amino-acid chain: uncharacterized protein (183 aa).

This sequence belongs to the isochorismatase family.

This is an uncharacterized protein from Bacillus subtilis (strain 168).